The chain runs to 374 residues: Pectinesterase (374 aa).

An N-terminal signal peptide occupies residues 1-31; the sequence is MVKLLNSTRELSINALSMLNSFGDMVAQATG. 2 N-linked (GlcNAc...) asparagine glycosylation sites follow: N58 and N124. Positions 133 and 163 each coordinate substrate. Residue D186 is the Proton donor of the active site. C200 and C220 form a disulfide bridge. D207 (nucleophile) is an active-site residue. The N-linked (GlcNAc...) asparagine glycan is linked to N230. R275 and W277 together coordinate substrate. Residue N303 is glycosylated (N-linked (GlcNAc...) asparagine).

This sequence belongs to the pectinesterase family. As to expression, pollen, and at much lower levels in pistils and petals.

It is found in the secreted. The protein localises to the cell wall. The enzyme catalyses [(1-&gt;4)-alpha-D-galacturonosyl methyl ester](n) + n H2O = [(1-&gt;4)-alpha-D-galacturonosyl](n) + n methanol + n H(+). It functions in the pathway glycan metabolism; pectin degradation; 2-dehydro-3-deoxy-D-gluconate from pectin: step 1/5. In terms of biological role, may play a role in pollen germination and/or tube growth. The polypeptide is Pectinesterase (PPE1) (Petunia integrifolia (Violet-flowered petunia)).